Here is a 176-residue protein sequence, read N- to C-terminus: Large ribosomal subunit protein uL6 (176 aa).

It belongs to the universal ribosomal protein uL6 family. In terms of assembly, part of the 50S ribosomal subunit.

Its function is as follows. This protein binds to the 23S rRNA, and is important in its secondary structure. It is located near the subunit interface in the base of the L7/L12 stalk, and near the tRNA binding site of the peptidyltransferase center. The polypeptide is Large ribosomal subunit protein uL6 (Burkholderia multivorans (strain ATCC 17616 / 249)).